We begin with the raw amino-acid sequence, 1651 residues long: Actin remodeling regulator NHS (1651 aa).

3 disordered regions span residues 1 to 104, 235 to 274, and 288 to 314; these read MPFA…EAAP, QALR…SQRR, and TRSP…DEDT. Positions 1 to 262 are WAVE homology domain (WHD); sequence MPFAKRIVEP…AAPLSIAAPP (262 aa). Residues 65–76 are compositionally biased toward pro residues; the sequence is SGLPPPPPPLPA. A phosphothreonine mark is found at T332 and T401. Position 415 is a phosphoserine (S415). Disordered stretches follow at residues 494-598 and 620-669; these read FTPA…DISS and HMDQ…ELSL. The span at 507-521 shows a compositional bias: basic and acidic residues; sequence LPREGNRGGDAEPKV. Phosphoserine is present on S533. A compositionally biased stretch (polar residues) spans 548–558; sequence APSSPSAQDHQ. Residues 629 to 648 show a composition bias toward low complexity; that stretch reads SSSGNWSGSSSTCPSQTSET. Positions 657–669 are enriched in polar residues; sequence LTGSSHCDSELSL. S739 carries the post-translational modification Phosphoserine. Disordered regions lie at residues 835-888, 980-1004, and 1017-1071; these read QGRP…SREM, SPES…PSVD, and GLAS…LKDG. The segment covering 859-874 has biased composition (basic and acidic residues); that stretch reads RKSDGNADISEKKEPK. The span at 980 to 993 shows a compositional bias: low complexity; the sequence is SPESSESQTSQSES. The segment covering 1020 to 1037 has biased composition (polar residues); sequence SPSSGYSSQSETPTSSFP. S1176 is modified (phosphoserine). A Phosphothreonine modification is found at T1262. S1329 carries the phosphoserine modification. Disordered regions lie at residues 1383 to 1436, 1454 to 1509, and 1526 to 1651; these read ISAK…VSPN, KVLG…NAKK, and SRSD…QSST. Composition is skewed to low complexity over residues 1408 to 1423 and 1465 to 1496; these read ESSP…LSED and SVRS…TPNS. S1499 carries the phosphoserine modification. The span at 1555-1568 shows a compositional bias: polar residues; the sequence is ESPQSTDDAHQGSQ. The segment covering 1588–1618 has biased composition (low complexity); sequence FSSKSFATSASARVGRSRAPPAASSSRYSVR. The segment covering 1640–1651 has biased composition (basic and acidic residues); that stretch reads SPHDDRSSQSST.

Belongs to the NHS family. In terms of assembly, interacts with the tight junction protein TJP1/ZO-1. Associates with actin-rich structures. Interacts with BRK1 and with all three members of the WAVE protein family, WASF1, WASF2 and WASF3. As to expression, detected at low levels in all tissues analyzed. Detected in fetal and adult brain, lens, retina, retinal pigment epithelium, placenta, lymphocytes and fibroblasts. Levels in retinal pigment epithelium, placenta, lymphocytes, and fibroblasts are very low. Expressed also in kidney, lung and thymus.

The protein resides in the apical cell membrane. The protein localises to the cell projection. Its subcellular location is the lamellipodium. It is found in the cell junction. It localises to the tight junction. The protein resides in the focal adhesion. The protein localises to the cytoplasm. May function in cell morphology by maintaining the integrity of the circumferential actin ring and controlling lamellipod formation. Involved in the regulation eye, tooth, brain and craniofacial development. This Homo sapiens (Human) protein is Actin remodeling regulator NHS (NHS).